Consider the following 945-residue polypeptide: Isoleucine--tRNA ligase (945 aa).

A 'HIGH' region motif is present at residues 66 to 76; sequence PYANGDIHLGH. Glu-581 provides a ligand contact to L-isoleucyl-5'-AMP. The 'KMSKS' region motif lies at 622–626; sequence KMSKS. Lys-625 contributes to the ATP binding site. Residues Cys-908, Cys-911, Cys-928, and Cys-931 each contribute to the Zn(2+) site.

It belongs to the class-I aminoacyl-tRNA synthetase family. IleS type 1 subfamily. Monomer. It depends on Zn(2+) as a cofactor.

The protein resides in the cytoplasm. It carries out the reaction tRNA(Ile) + L-isoleucine + ATP = L-isoleucyl-tRNA(Ile) + AMP + diphosphate. Functionally, catalyzes the attachment of isoleucine to tRNA(Ile). As IleRS can inadvertently accommodate and process structurally similar amino acids such as valine, to avoid such errors it has two additional distinct tRNA(Ile)-dependent editing activities. One activity is designated as 'pretransfer' editing and involves the hydrolysis of activated Val-AMP. The other activity is designated 'posttransfer' editing and involves deacylation of mischarged Val-tRNA(Ile). In Burkholderia lata (strain ATCC 17760 / DSM 23089 / LMG 22485 / NCIMB 9086 / R18194 / 383), this protein is Isoleucine--tRNA ligase.